Consider the following 140-residue polypeptide: Transcription antitermination protein NusB (140 aa).

It belongs to the NusB family.

Functionally, involved in transcription antitermination. Required for transcription of ribosomal RNA (rRNA) genes. Binds specifically to the boxA antiterminator sequence of the ribosomal RNA (rrn) operons. This chain is Transcription antitermination protein NusB, found in Myxococcus xanthus (strain DK1622).